Here is a 391-residue protein sequence, read N- to C-terminus: 12-oxophytodienoate reductase 3 (391 aa).

The residue at position 1 (M1) is an N-acetylmethionine. N-acetylthreonine; in 12-oxophytodienoate reductase 3, N-terminally processed is present on T2. Residues 31–33 (PMT), G64, and Q106 each bind FMN. H186 provides a ligand contact to substrate. The Proton donor role is filled by Y191. R238 contacts FMN. Residue R284 coordinates substrate. Residues 320–322 (SGG) and 343–344 (GR) contribute to the FMN site. The Microbody targeting signal motif lies at 389-391 (SRL).

This sequence belongs to the NADH:flavin oxidoreductase/NADH oxidase family. FMN serves as cofactor. As to expression, expressed in green seedling, leaves, flowers (anthers, pistil, petal and stamen), and to a lower extent in roots and siliques. Specifically expressed in filament during anther dehiscence initiation.

The protein resides in the peroxisome. It catalyses the reaction (1S,2S)-OPC-8 + NADP(+) = (9S,13S,15Z)-12-oxophyto-10,15-dienoate + NADPH + H(+). Its pathway is lipid metabolism; oxylipin biosynthesis. Its function is as follows. Specifically cleaves olefinic bonds in cyclic enones. Involved in the biosynthesis of jasmonic acid (JA) and perhaps in biosynthesis or metabolism of other oxylipin signaling moleclules. Required for the spatial and temporal regulation of JA levels during dehiscence of anthers, promoting the stomium degeneration program. In vitro, reduces 9S,13S-12-oxophytodienoic acid (9S,13S-OPDA) and 9R,13R-OPDA to 9S,13S-OPC-8:0 and 9R,13R-OPC-8:0, respectively. Can detoxify the explosive 2,4,6-trinitrotoluene (TNT) in vitro by catalyzing its nitroreduction to form hydroxylamino-dinitrotoluene (HADNT). This chain is 12-oxophytodienoate reductase 3, found in Arabidopsis thaliana (Mouse-ear cress).